The primary structure comprises 290 residues: Enoyl-CoA hydratase, mitochondrial (290 aa).

Residues 1 to 27 (MAALRALLPRACSSLLSSVRCPELRRF) constitute a mitochondrion transit peptide. Position 98 to 101 (98 to 101 (ADIK)) interacts with substrate. The residue at position 101 (Lys-101) is an N6-acetyllysine; alternate. An N6-succinyllysine; alternate modification is found at Lys-101. Ser-114 carries the phosphoserine modification. An N6-acetyllysine; alternate modification is found at Lys-115. The residue at position 115 (Lys-115) is an N6-succinyllysine; alternate. Gly-141 serves as a coordination point for substrate. Lys-204 bears the N6-succinyllysine mark. Position 211 is an N6-acetyllysine (Lys-211). Position 217 is an N6-acetyllysine; alternate (Lys-217). Lys-217 is modified (N6-succinyllysine; alternate).

It belongs to the enoyl-CoA hydratase/isomerase family. As to quaternary structure, homohexamer; dimer of trimers. Post-translationally, acetylation of Lys-101 is observed in liver mitochondria from fasted mice but not from fed mice.

It localises to the mitochondrion matrix. The enzyme catalyses a (3S)-3-hydroxyacyl-CoA = a (2E)-enoyl-CoA + H2O. The catalysed reaction is a (3E)-enoyl-CoA = a 4-saturated (2E)-enoyl-CoA. It carries out the reaction (3E)-hexenoyl-CoA = (2E)-hexenoyl-CoA. It catalyses the reaction (3S)-3-hydroxybutanoyl-CoA = (2E)-butenoyl-CoA + H2O. The enzyme catalyses 3-hydroxyisovaleryl-CoA = 3-methylbut-2-enoyl-CoA + H2O. The catalysed reaction is 3-hydroxypropanoyl-CoA = acryloyl-CoA + H2O. It carries out the reaction 3-hydroxybutanoyl-CoA = (2E)-butenoyl-CoA + H2O. It catalyses the reaction 2-methylpropenoyl-CoA + H2O = (S)-3-hydroxyisobutanoyl-CoA. The enzyme catalyses (3S)-hydroxyhexanoyl-CoA = (2E)-hexenoyl-CoA + H2O. The catalysed reaction is (3S)-hydroxydecanoyl-CoA = (2E)-decenoyl-CoA + H2O. Its pathway is lipid metabolism; fatty acid beta-oxidation. Its function is as follows. Converts unsaturated trans-2-enoyl-CoA species ((2E)-enoyl-CoA) to the corresponding (3S)-3-hydroxyacyl-CoA species through addition of a water molecule to the double bond. Catalyzes the hydration of medium- and short-chained fatty enoyl-CoA thioesters from 4 carbons long (C4) up to C16. Has high substrate specificity for crotonyl-CoA ((2E)-butenoyl-CoA) and moderate specificity for acryloyl-CoA, 3-methylcrotonyl-CoA (3-methyl-(2E)-butenoyl-CoA) and methacrylyl-CoA ((2E)-2-methylpropenoyl-CoA). Can bind tiglyl-CoA (2-methylcrotonoyl-CoA), but hydrates only a small amount of this substrate. Plays a key role in the beta-oxidation spiral of short- and medium-chain fatty acid oxidation. At a lower rate than the hydratase reaction, catalyzes the isomerase reaction of trans-3-enoyl-CoA species (such as (3E)-hexenoyl-CoA) to trans-2-enoyl-CoA species (such as (2E)-hexenoyl-CoA), which are subsequently hydrated to 3(S)-3-hydroxyacyl-CoA species (such as (3S)-hydroxyhexanoyl-CoA). This is Enoyl-CoA hydratase, mitochondrial from Mus musculus (Mouse).